Here is a 352-residue protein sequence, read N- to C-terminus: Putative [LysW]-L-2-aminoadipate 6-phosphate reductase (352 aa).

11–14 (SGYT) serves as a coordination point for NADP(+). Cys148 is a catalytic residue. Residue Asn319 coordinates NADP(+).

This sequence belongs to the NAGSA dehydrogenase family. Type 1 subfamily. LysY sub-subfamily.

It is found in the cytoplasm. The catalysed reaction is [amino-group carrier protein]-C-terminal-N-(1-carboxy-5-oxopentan-1-yl)-L-glutamine + phosphate + NADP(+) = [amino-group carrier protein]-C-terminal-N-(1-carboxy-5-phosphooxy-5-oxopentan-1-yl)-L-glutamine + NADPH + H(+). Its pathway is amino-acid biosynthesis; L-lysine biosynthesis via AAA pathway; L-lysine from L-alpha-aminoadipate (Thermus route): step 3/5. Functionally, catalyzes the NADPH-dependent reduction of [LysW]-aminoadipate 6-phosphate to yield [LysW]-aminoadipate 6-semialdehyde. The polypeptide is Putative [LysW]-L-2-aminoadipate 6-phosphate reductase (Thermomicrobium roseum (strain ATCC 27502 / DSM 5159 / P-2)).